A 256-amino-acid chain; its full sequence is MTKFWIGTSWKMNKTLAEARLFAEALKAADAGRSPDIQRFVIPPFTAVREVKEILSGTSVKVGAQNMHWADQGAWTGEISPLMLKDCNLDIVELGHSERREHFGETNETVGLKVEAAVRHGLIPLICIGETLEDRESGRAAAVLEEEVRGALSKLSEAQKQAEILFAYEPVWAIGENGIPASADYADARQAEIIAVAQSVLARRVPCLYGGSVNPGNCEELIACPHIDGLFIGRSAWNVEGYLDILARCATKVQAN.

The active-site Electrophile is histidine 96. Glutamate 169 serves as the catalytic Proton acceptor. 2 residues coordinate substrate: glycine 175 and serine 212.

This sequence belongs to the triosephosphate isomerase family. As to quaternary structure, homodimer.

The protein resides in the cytoplasm. The enzyme catalyses L-erythrulose 1-phosphate = D-erythrulose 4-phosphate. It participates in carbohydrate metabolism; erythritol degradation. In terms of biological role, catalyzes the isomerization of D-erythrulose-4P to L-erythrulose-1P. Involved in the degradation pathway of erythritol, that allows B.abortus to grow on this compound as the sole carbon source. This is L-erythrulose-1-phosphate isomerase from Brucella abortus (strain 2308).